The following is a 485-amino-acid chain: Glutamyl-tRNA(Gln) amidotransferase subunit A (485 aa).

Active-site charge relay system residues include lysine 78 and serine 153. The active-site Acyl-ester intermediate is the serine 177.

It belongs to the amidase family. GatA subfamily. As to quaternary structure, heterotrimer of A, B and C subunits.

It catalyses the reaction L-glutamyl-tRNA(Gln) + L-glutamine + ATP + H2O = L-glutaminyl-tRNA(Gln) + L-glutamate + ADP + phosphate + H(+). In terms of biological role, allows the formation of correctly charged Gln-tRNA(Gln) through the transamidation of misacylated Glu-tRNA(Gln) in organisms which lack glutaminyl-tRNA synthetase. The reaction takes place in the presence of glutamine and ATP through an activated gamma-phospho-Glu-tRNA(Gln). The sequence is that of Glutamyl-tRNA(Gln) amidotransferase subunit A from Bacillus cereus (strain Q1).